The chain runs to 703 residues: Arylphorin subunit beta (703 aa).

Positions 1 to 16 (MKTVIILAGLVALALG) are cleaved as a signal peptide. Asparagine 72 and asparagine 211 each carry an N-linked (GlcNAc...) asparagine glycan.

The protein belongs to the hemocyanin family. In terms of assembly, arylphorin is a hexamer of subunits alpha and beta. As to expression, fat body.

Its subcellular location is the secreted. The protein localises to the extracellular space. Arylphorin is a larval storage protein (LSP) which may serve as a storage protein used primarily as a source of aromatic amino acids for protein synthesis during metamorphosis. It is a constituent of the sclerotizing system of the cuticle, and serves as a carrier for ecdysteroid hormone. In Manduca sexta (Tobacco hawkmoth), this protein is Arylphorin subunit beta.